The primary structure comprises 198 residues: DNA damage response protein D (198 aa).

A disordered region spans residues 124–198 (SAAPTDPAGP…SEAGENTPAA (75 aa)). Residues 136 to 180 (PGTDRAERTAAERTASERATHDRASTERPARPRRSAEPEAVRTED) are compositionally biased toward basic and acidic residues.

Appears to contribute to D.radiodurans capacity to survive exposure to ionizing radiation. May play a role in DNA repair and genome reconstitution. This chain is DNA damage response protein D (ddrD), found in Deinococcus radiodurans (strain ATCC 13939 / DSM 20539 / JCM 16871 / CCUG 27074 / LMG 4051 / NBRC 15346 / NCIMB 9279 / VKM B-1422 / R1).